The chain runs to 73 residues: U-scoloptoxin(15)-Sm2a (73 aa).

The N-terminal stretch at 1-20 (MKFYIVFCLFVVLLINFAAA) is a signal peptide. Intrachain disulfides connect cysteine 39-cysteine 66 and cysteine 43-cysteine 68.

This sequence belongs to the scoloptoxin-15 family. In terms of tissue distribution, expressed by the venom gland.

Its subcellular location is the secreted. In terms of biological role, activity unknown, even that a lot of targets (Kv, Nav, Cav) have been tested and activities on insects and mice have been tested. In Scolopendra morsitans (Tanzanian blue ringleg centipede), this protein is U-scoloptoxin(15)-Sm2a.